The sequence spans 315 residues: Tryptophan prenyltransferase ComQ (315 aa).

Residues aspartate 95 and aspartate 99 each contribute to the Mg(2+) site.

It belongs to the FPP/GGPP synthase family. It depends on Mg(2+) as a cofactor.

Its subcellular location is the cell membrane. The catalysed reaction is L-tryptophyl-[protein] + (2E,6E)-farnesyl diphosphate = (2S,3R)-3-farnesyl-2,3-dihydro-2,N(alpha)-cyclo-L-tryptophyl-[protein] + diphosphate. Its function is as follows. Part of a major quorum-sensing system that regulates the development of genetic competence. Involved in the maturation of the competence pheromone ComX. Acts by catalyzing the transfer of a farnesyl group on the ComX pheromone. In vitro, can also catalyze the farnesylation of single tryptophan and tryptophan derivatives. The protein is Tryptophan prenyltransferase ComQ of Bacillus subtilis subsp. natto (strain BEST195).